A 91-amino-acid chain; its full sequence is Small ribosomal subunit protein uS19 (91 aa).

Belongs to the universal ribosomal protein uS19 family.

Protein S19 forms a complex with S13 that binds strongly to the 16S ribosomal RNA. The sequence is that of Small ribosomal subunit protein uS19 from Syntrophotalea carbinolica (strain DSM 2380 / NBRC 103641 / GraBd1) (Pelobacter carbinolicus).